The primary structure comprises 45 residues: MTERHTAKDIRKNAPKGENPGQPEPLSGSKKVKKRNHVSQTNGEG.

Residues 1–12 (MTERHTAKDIRK) are compositionally biased toward basic and acidic residues. The segment at 1 to 45 (MTERHTAKDIRKNAPKGENPGQPEPLSGSKKVKKRNHVSQTNGEG) is disordered.

The protein belongs to the SspP family.

Its subcellular location is the spore core. This is Small, acid-soluble spore protein P from Halalkalibacterium halodurans (strain ATCC BAA-125 / DSM 18197 / FERM 7344 / JCM 9153 / C-125) (Bacillus halodurans).